The chain runs to 482 residues: tRNA sulfurtransferase (482 aa).

Residues 61-165 (PAIRDALTRI…NDRLLLVKGR (105 aa)) enclose the THUMP domain. ATP-binding positions include 183–184 (LI), lysine 265, glycine 287, and glutamine 296. A disulfide bond links cysteine 344 and cysteine 456. Residues 404-482 (FGANDAILDI…GFSNVKVYRP (79 aa)) enclose the Rhodanese domain. The active-site Cysteine persulfide intermediate is the cysteine 456.

The protein belongs to the ThiI family.

Its subcellular location is the cytoplasm. The enzyme catalyses [ThiI sulfur-carrier protein]-S-sulfanyl-L-cysteine + a uridine in tRNA + 2 reduced [2Fe-2S]-[ferredoxin] + ATP + H(+) = [ThiI sulfur-carrier protein]-L-cysteine + a 4-thiouridine in tRNA + 2 oxidized [2Fe-2S]-[ferredoxin] + AMP + diphosphate. It carries out the reaction [ThiS sulfur-carrier protein]-C-terminal Gly-Gly-AMP + S-sulfanyl-L-cysteinyl-[cysteine desulfurase] + AH2 = [ThiS sulfur-carrier protein]-C-terminal-Gly-aminoethanethioate + L-cysteinyl-[cysteine desulfurase] + A + AMP + 2 H(+). It functions in the pathway cofactor biosynthesis; thiamine diphosphate biosynthesis. Catalyzes the ATP-dependent transfer of a sulfur to tRNA to produce 4-thiouridine in position 8 of tRNAs, which functions as a near-UV photosensor. Also catalyzes the transfer of sulfur to the sulfur carrier protein ThiS, forming ThiS-thiocarboxylate. This is a step in the synthesis of thiazole, in the thiamine biosynthesis pathway. The sulfur is donated as persulfide by IscS. This Klebsiella pneumoniae subsp. pneumoniae (strain ATCC 700721 / MGH 78578) protein is tRNA sulfurtransferase.